We begin with the raw amino-acid sequence, 269 residues long: WW domain-binding protein 1 (269 aa).

2 consecutive short sequence motifs (PPxY motif) follow at residues 124-127 and 137-141; these read PPAY and PPPPY. 2 disordered regions span residues 169-203 and 249-269; these read EGTN…PPSC and PPES…GDIP. A compositionally biased stretch (polar residues) spans 174-183; sequence EGVSSHQSAP.

As to quaternary structure, interacts with NEDD4. Binds to the WW domain of YAP1, WWP1 and WWP2. Interacts with WWOX. Expressed in most tissues but at significantly lower levels in placenta, lung, liver, and kidney.

The chain is WW domain-binding protein 1 (WBP1) from Homo sapiens (Human).